The primary structure comprises 147 residues: Myoglobin (147 aa).

The Globin domain occupies 2–141 (ADFDAVLKCW…IIADLEANYK (140 aa)). Position 60 (histidine 60) interacts with nitrite. An O2-binding site is contributed by histidine 60. Residue histidine 89 participates in heme b binding.

This sequence belongs to the globin family. In terms of assembly, monomeric.

Its subcellular location is the cytoplasm. The protein resides in the sarcoplasm. It carries out the reaction Fe(III)-heme b-[protein] + nitric oxide + H2O = Fe(II)-heme b-[protein] + nitrite + 2 H(+). The enzyme catalyses H2O2 + AH2 = A + 2 H2O. In terms of biological role, monomeric heme protein which primary function is to store oxygen and facilitate its diffusion within muscle tissues. Reversibly binds oxygen through a pentacoordinated heme iron and enables its timely and efficient release as needed during periods of heightened demand. Depending on the oxidative conditions of tissues and cells, and in addition to its ability to bind oxygen, it also has a nitrite reductase activity whereby it regulates the production of bioactive nitric oxide. Under stress conditions, like hypoxia and anoxia, it also protects cells against reactive oxygen species thanks to its pseudoperoxidase activity. The protein is Myoglobin (mb) of Thunnus obesus (Bigeye tuna).